We begin with the raw amino-acid sequence, 147 residues long: Transcriptional regulator MraZ (147 aa).

SpoVT-AbrB domains follow at residues 5–51 (GTPV…PQPV) and 80–123 (ACDV…DSEK).

The protein belongs to the MraZ family. Forms oligomers.

It is found in the cytoplasm. The protein localises to the nucleoid. The sequence is that of Transcriptional regulator MraZ from Nitrosospira multiformis (strain ATCC 25196 / NCIMB 11849 / C 71).